A 145-amino-acid polypeptide reads, in one-letter code: NADH dehydrogenase [ubiquinone] 1 alpha subcomplex subunit 12 (145 aa).

Met-1 carries the N-acetylmethionine modification.

This sequence belongs to the complex I NDUFA12 subunit family. In terms of assembly, complex I is composed of 45 different subunits.

It localises to the mitochondrion inner membrane. Its function is as follows. Accessory subunit of the mitochondrial membrane respiratory chain NADH dehydrogenase (Complex I), that is believed not to be involved in catalysis. Complex I functions in the transfer of electrons from NADH to the respiratory chain. The immediate electron acceptor for the enzyme is believed to be ubiquinone. The protein is NADH dehydrogenase [ubiquinone] 1 alpha subcomplex subunit 12 (Ndufa12) of Mus musculus (Mouse).